Reading from the N-terminus, the 214-residue chain is 14-3-3 protein homolog 2 (214 aa).

The protein belongs to the 14-3-3 family.

The protein is 14-3-3 protein homolog 2 of Schistosoma mansoni (Blood fluke).